Reading from the N-terminus, the 536-residue chain is Feruloyl esterase B (536 aa).

A signal peptide spans 1-20; that stretch reads MKTSIVLSIVALFLTSKASA. Residues 21-59 enclose the CBM10 domain; it reads DCWSERLGWPCCSDSNAEVIYVDDDGDWGVENNDWCGIQ. Positions 22-59 are cellulose-binding; the sequence is CWSERLGWPCCSDSNAEVIYVDDDGDWGVENNDWCGIQ. N-linked (GlcNAc...) asparagine glycosylation occurs at Asn65. Repeat copies occupy residues 78-90, 91-103, 104-116, 117-129, 134-146, 151-163, 164-176, 181-193, 194-206, 211-223, 224-236, and 237-249. Positions 78–249 are 12 X 13 AA repeats of N-Q-G-G-G-M-[PQ]-W-G-D-F-G-G; it reads NQGGGMPWGD…GGMQWGDFGG (172 aa). The segment covering 203-252 has biased composition (gly residues); it reads DFGGNQGGNQGGGMPWGDFGGNQGGGMQWGDFGGNQGGGMQWGDFGGNQG. Positions 203-273 are disordered; it reads DFGGNQGGNQ…SGPTVEYSTD (71 aa). A catalytic region spans residues 257–536; it reads WGNQGGNSGP…WDFVKQFSLP (280 aa).

As to quaternary structure, component of the multienzyme cellulase-hemicellulase complex.

It localises to the secreted. The catalysed reaction is feruloyl-polysaccharide + H2O = ferulate + polysaccharide.. Its activity is regulated as follows. Inhibited by the specific serine esterase inhibitor AEBSF. Its function is as follows. Involved in degradation of plant cell walls. Hydrolyzes of the feruloyl-arabinose ester bond in arabinoxylans as well as the feruloyl-galactose and feruloyl-arabinose ester bonds in pectin. The chain is Feruloyl esterase B (ESTA) from Piromyces equi.